Consider the following 95-residue polypeptide: uncharacterized protein (95 aa).

Belongs to the asfivirus DP96R family.

This is an uncharacterized protein from African swine fever virus (isolate Warthog/Namibia/Wart80/1980) (ASFV).